Here is a 406-residue protein sequence, read N- to C-terminus: Argininosuccinate synthase (406 aa).

8-16 (AYSGGLDTS) provides a ligand contact to ATP. Tyr-86 serves as a coordination point for L-citrulline. Gly-116 lines the ATP pocket. Positions 118, 122, and 123 each coordinate L-aspartate. An L-citrulline-binding site is contributed by Asn-122. Arg-126, Ser-174, Ser-183, Glu-259, and Tyr-271 together coordinate L-citrulline.

This sequence belongs to the argininosuccinate synthase family. Type 1 subfamily. Homotetramer.

Its subcellular location is the cytoplasm. It catalyses the reaction L-citrulline + L-aspartate + ATP = 2-(N(omega)-L-arginino)succinate + AMP + diphosphate + H(+). It functions in the pathway amino-acid biosynthesis; L-arginine biosynthesis; L-arginine from L-ornithine and carbamoyl phosphate: step 2/3. This Oenococcus oeni (strain ATCC BAA-331 / PSU-1) protein is Argininosuccinate synthase.